The chain runs to 547 residues: MTKYIFVTGGVVSSVGKGIGVASIGRLLKSRGFSVSVMKLDPYLNVDPGTMSPYQHGEVFVTADGAETDLDLGHYERFIDVNLSRLSNVTTGQIYSAVIAKERRGDYLGGTIQVIPHITNEIKARIGSLARSSQADVVIVEIGGTVGDIESLPFLEAIRQMRKDVGRDNILYIHVTLLPHISTGELKTKPTQHSVMALRNVGISADVILCRADRPIDDDIREKIAFFADVDVRAVIPVPTVDSIYEVPLVLEDMGLGDYLVERLGLPATPPDLEDWRSLVARIRQEKRRLPIALVGKYVELHDAYISVVEALHHAAIEQLIDVDIRWIAAEDVEREGPARLLSGVYGILVPGGFGERGIEGKIASADYARVNGIPYLGLCLGMQCATIAFARHVLGTHDVNSTEFNPQTAHPVIDLMPDQRDITEKGGTMRLGLYPCDLVPGTRAHAAYGCDRVEERHRHRFEFNNRYRAVLESAGLVISGLSPDRQLVEIIELRDHPWYVASQFHPEFQSRPGKPHPLFRGFIAAAAQTLLAGEARQLPLVESASS.

Residues 1 to 266 (MTKYIFVTGG…GDYLVERLGL (266 aa)) are amidoligase domain. Position 13 (Ser-13) interacts with CTP. UTP is bound at residue Ser-13. 14-19 (SVGKGI) contributes to the ATP binding site. Tyr-54 lines the L-glutamine pocket. Asp-71 serves as a coordination point for ATP. Positions 71 and 141 each coordinate Mg(2+). CTP-binding positions include 148-150 (DIE), 187-192 (KTKPTQ), and Lys-223. Residues 187–192 (KTKPTQ) and Lys-223 each bind UTP. One can recognise a Glutamine amidotransferase type-1 domain in the interval 291–533 (PIALVGKYVE…IAAAAQTLLA (243 aa)). An L-glutamine-binding site is contributed by Gly-353. Residue Cys-380 is the Nucleophile; for glutamine hydrolysis of the active site. L-glutamine-binding positions include 381-384 (LGMQ), Glu-404, and Arg-461. Active-site residues include His-506 and Glu-508.

This sequence belongs to the CTP synthase family. As to quaternary structure, homotetramer.

It carries out the reaction UTP + L-glutamine + ATP + H2O = CTP + L-glutamate + ADP + phosphate + 2 H(+). It catalyses the reaction L-glutamine + H2O = L-glutamate + NH4(+). The catalysed reaction is UTP + NH4(+) + ATP = CTP + ADP + phosphate + 2 H(+). Its pathway is pyrimidine metabolism; CTP biosynthesis via de novo pathway; CTP from UDP: step 2/2. Allosterically activated by GTP, when glutamine is the substrate; GTP has no effect on the reaction when ammonia is the substrate. The allosteric effector GTP functions by stabilizing the protein conformation that binds the tetrahedral intermediate(s) formed during glutamine hydrolysis. Inhibited by the product CTP, via allosteric rather than competitive inhibition. Functionally, catalyzes the ATP-dependent amination of UTP to CTP with either L-glutamine or ammonia as the source of nitrogen. Regulates intracellular CTP levels through interactions with the four ribonucleotide triphosphates. This chain is CTP synthase, found in Chloroflexus aggregans (strain MD-66 / DSM 9485).